Consider the following 378-residue polypeptide: Quinolinate synthase (378 aa).

2 residues coordinate iminosuccinate: H59 and S80. Residue C125 participates in [4Fe-4S] cluster binding. Iminosuccinate contacts are provided by residues 151-153 (YAN) and S168. C212 provides a ligand contact to [4Fe-4S] cluster. Residues 238 to 240 (HPE) and T255 each bind iminosuccinate. C309 contacts [4Fe-4S] cluster.

It belongs to the quinolinate synthase family. Type 1 subfamily. Requires [4Fe-4S] cluster as cofactor.

The protein resides in the cytoplasm. It carries out the reaction iminosuccinate + dihydroxyacetone phosphate = quinolinate + phosphate + 2 H2O + H(+). Its pathway is cofactor biosynthesis; NAD(+) biosynthesis; quinolinate from iminoaspartate: step 1/1. In terms of biological role, catalyzes the condensation of iminoaspartate with dihydroxyacetone phosphate to form quinolinate. The sequence is that of Quinolinate synthase from Burkholderia pseudomallei (strain 668).